The sequence spans 227 residues: Cleavage and polyadenylation specificity factor subunit 5 (227 aa).

S2 is subject to N-acetylserine. A necessary for RNA-binding region spans residues 2-147; sequence SVVPPNRSQT…DWVIDDCIGN (146 aa). R15 is subject to Omega-N-methylarginine. N6-acetyllysine is present on residues K23 and K29. Y40 bears the Phosphotyrosine mark. The residue at position 56 (K56) is an N6-acetyllysine. Residues 76–201 enclose the Nudix hydrolase domain; sequence MRRTVEGVLI…KLVAAPLFEL (126 aa). The tract at residues 81–160 is necessary for interactions with PAPOLA and PABPN1; the sequence is EGVLIVHEHR…PNFEPPQYPY (80 aa). The segment at 102-104 is interaction with RNA; it reads TFF. A Nudix box motif is present at residues 109–130; that stretch reads GELNPGEDEVEGLKRLMTEILG.

It belongs to the Nudix hydrolase family. CPSF5 subfamily. Homodimer (via N- and C-terminus); binds RNA as homodimer. Component of the cleavage factor Im (CFIm) complex which is a heterotetramer composed of two subunits of NUDT21/CPSF5 and two subunits of CPSF6 or CPSF7 or a heterodimer of CPSF6 and CPSF7. The cleavage factor Im (CFIm) complex associates with the CPSF and CSTF complexes to promote the assembly of the core mRNA 3'-processing machinery. Interacts with CPSF6 (via the RRM domain); this interaction is direct and enhances binding to RNA. Interacts with CPSF7. Interacts with FIP1L1; this interaction occurs in a RNA sequence-specific manner. Interacts with PABPN1. Interacts (via N-terminus) with PAPOLA (via C-terminus); this interaction is direct and diminished by acetylation. Interacts with SNRNP70. Interacts with VIRMA. Acetylated mainly by p300/CBP, recruited to the complex by CPSF6. Acetylation decreases interaction with PAPAO. Deacetylated by the class I/II HDACs, HDAC1, HDAC3 and HDAC10, and by the class III HDACs, SIRT1 and SIRT2.

The protein localises to the nucleus. It is found in the cytoplasm. In terms of biological role, component of the cleavage factor Im (CFIm) complex that functions as an activator of the pre-mRNA 3'-end cleavage and polyadenylation processing required for the maturation of pre-mRNA into functional mRNAs. CFIm contributes to the recruitment of multiprotein complexes on specific sequences on the pre-mRNA 3'-end, so called cleavage and polyadenylation signals (pA signals). Most pre-mRNAs contain multiple pA signals, resulting in alternative cleavage and polyadenylation (APA) producing mRNAs with variable 3'-end formation. The CFIm complex acts as a key regulator of cleavage and polyadenylation site choice during APA through its binding to 5'-UGUA-3' elements localized in the 3'-untranslated region (UTR) for a huge number of pre-mRNAs. NUDT21/CPSF5 activates indirectly the mRNA 3'-processing machinery by recruiting CPSF6 and/or CPSF7. Binds to 5'-UGUA-3' elements localized upstream of pA signals that act as enhancers of pre-mRNA 3'-end processing. The homodimer mediates simultaneous sequence-specific recognition of two 5'-UGUA-3' elements within the pre-mRNA. Plays a role in somatic cell fate transitions and pluripotency by regulating widespread changes in gene expression through an APA-dependent function. Binds to chromatin. Binds to, but does not hydrolyze mono- and di-adenosine nucleotides. The polypeptide is Cleavage and polyadenylation specificity factor subunit 5 (NUDT21) (Bos taurus (Bovine)).